The chain runs to 232 residues: 2,3-bisphosphoglycerate-dependent phosphoglycerate mutase (232 aa).

Substrate-binding positions include 10–17 (RHGESQWN), 23–24 (TG), R62, 89–92 (ERHY), K100, 116–117 (RR), and 185–186 (GN). H11 functions as the Tele-phosphohistidine intermediate in the catalytic mechanism. Catalysis depends on E89, which acts as the Proton donor/acceptor.

It belongs to the phosphoglycerate mutase family. BPG-dependent PGAM subfamily. Homodimer.

The catalysed reaction is (2R)-2-phosphoglycerate = (2R)-3-phosphoglycerate. It functions in the pathway carbohydrate degradation; glycolysis; pyruvate from D-glyceraldehyde 3-phosphate: step 3/5. Its function is as follows. Catalyzes the interconversion of 2-phosphoglycerate and 3-phosphoglycerate. The sequence is that of 2,3-bisphosphoglycerate-dependent phosphoglycerate mutase from Blochmanniella floridana.